A 161-amino-acid chain; its full sequence is Endoribonuclease YbeY (161 aa).

The Zn(2+) site is built by histidine 121, histidine 125, and histidine 131.

Belongs to the endoribonuclease YbeY family. The cofactor is Zn(2+).

The protein resides in the cytoplasm. Functionally, single strand-specific metallo-endoribonuclease involved in late-stage 70S ribosome quality control and in maturation of the 3' terminus of the 16S rRNA. This Xanthomonas axonopodis pv. citri (strain 306) protein is Endoribonuclease YbeY.